The chain runs to 132 residues: Small ribosomal subunit protein uS8 (132 aa).

The protein belongs to the universal ribosomal protein uS8 family. In terms of assembly, part of the 30S ribosomal subunit. Contacts proteins S5 and S12.

In terms of biological role, one of the primary rRNA binding proteins, it binds directly to 16S rRNA central domain where it helps coordinate assembly of the platform of the 30S subunit. The polypeptide is Small ribosomal subunit protein uS8 (Sinorhizobium medicae (strain WSM419) (Ensifer medicae)).